A 120-amino-acid polypeptide reads, in one-letter code: Putative 15 kDa capsid protein (120 aa).

Its subcellular location is the virion. The polypeptide is Putative 15 kDa capsid protein (P15) (Orgyia pseudotsugata (Douglas-fir tussock moth)).